The primary structure comprises 257 residues: Dihydroorotate dehydrogenase B (NAD(+)), electron transfer subunit (257 aa).

The 101-residue stretch at 2–102 (IGRERMTVAS…LGPLGNGFPL (101 aa)) folds into the FAD-binding FR-type domain. Residues 53–56 (RPLS), 70–72 (IYR), and 77–78 (GT) contribute to the FAD site. [2Fe-2S] cluster contacts are provided by C221, C226, C229, and C244.

The protein belongs to the PyrK family. As to quaternary structure, heterotetramer of 2 PyrK and 2 PyrD type B subunits. The cofactor is [2Fe-2S] cluster. FAD is required as a cofactor.

It participates in pyrimidine metabolism; UMP biosynthesis via de novo pathway; orotate from (S)-dihydroorotate (NAD(+) route): step 1/1. Functionally, responsible for channeling the electrons from the oxidation of dihydroorotate from the FMN redox center in the PyrD type B subunit to the ultimate electron acceptor NAD(+). This is Dihydroorotate dehydrogenase B (NAD(+)), electron transfer subunit from Bacillus caldolyticus.